Here is a 154-residue protein sequence, read N- to C-terminus: Small ribosomal subunit protein uS19 (154 aa).

The protein belongs to the universal ribosomal protein uS19 family.

The chain is Small ribosomal subunit protein uS19 (RPS15) from Oryza sativa subsp. japonica (Rice).